Reading from the N-terminus, the 515-residue chain is Maturase K (515 aa).

The protein belongs to the intron maturase 2 family. MatK subfamily.

The protein resides in the plastid. It is found in the chloroplast. Its function is as follows. Usually encoded in the trnK tRNA gene intron. Probably assists in splicing its own and other chloroplast group II introns. This Pinus contorta (Shore pine) protein is Maturase K.